We begin with the raw amino-acid sequence, 552 residues long: MSTKTVIRSQTSHRGFSAGSARLPGLNRSGFSSVSVCRSRGSGGSRAVCGGAGFGSRSLCGVGSSQRISIGGGSCGIGGGYGGRFGGSFGYGGGAGGSLGFGAGAGFGGGYGGAGFPVCPPGGIQEVTINQSLLTPMNLQIDPTIQRVRTEEREQIKTLNNKFASFIDKVRFLEQQNKVLDTKWALLQEQGTKTVRQGLETLFEQYINDLRKELDNILGQRGRLDSELRNMQGTVEDYKSKYEDEINRRTAAENEFVTLKKDVDAAYMNKVELQAKADSLTDEINFLRALYEAELSQMQTHISDTSVVLSMDNNRSLDLDSIIAEVKAQYEEIAKRSRAEAESWYQTKYEELQITAGRHGDDLRNTKQEISEINRMIQRLRSEIDHVKKQIANLQAAIAEAEQRGEMALKDARGKLEGLEDALQKAKQDMARLLKEYQDLMNVKLALDVEIATYRTLLEGEECRLNGEGVGPVNISVVQSTVSSSYGSAGGASSSIGLGGSSSFSYGGSHSIGGGFSAGSGRGISSGLSSSGGSSSTIKYTTTSSTRKSYRP.

A compositionally biased stretch (polar residues) spans 1–14 (MSTKTVIRSQTSHR). Positions 1 to 21 (MSTKTVIRSQTSHRGFSAGSA) are disordered. Residues 1-151 (MSTKTVIRSQ…DPTIQRVRTE (151 aa)) form a head region. The coil 1A stretch occupies residues 152-187 (EREQIKTLNNKFASFIDKVRFLEQQNKVLDTKWALL). In terms of domain architecture, IF rod spans 152–465 (EREQIKTLNN…TLLEGEECRL (314 aa)). Residues 188–206 (QEQGTKTVRQGLETLFEQY) are linker 1. Residues 207–298 (INDLRKELDN…ALYEAELSQM (92 aa)) form a coil 1B region. A linker 12 region spans residues 299 to 322 (QTHISDTSVVLSMDNNRSLDLDSI). The coil 2 stretch occupies residues 323–461 (IAEVKAQYEE…ATYRTLLEGE (139 aa)). Positions 462–552 (ECRLNGEGVG…TSSTRKSYRP (91 aa)) are tail. Positions 524 to 552 (ISSGLSSSGGSSSTIKYTTTSSTRKSYRP) are disordered. Low complexity predominate over residues 525–552 (SSGLSSSGGSSSTIKYTTTSSTRKSYRP).

The protein belongs to the intermediate filament family. As to quaternary structure, heterodimer of a type I and a type II keratin. KRT6 isomers associate with KRT16 and/or KRT17. Interacts with TCHP.

Functionally, epidermis-specific type I keratin involved in wound healing. Involved in the activation of follicular keratinocytes after wounding, while it does not play a major role in keratinocyte proliferation or migration. Participates in the regulation of epithelial migration by inhibiting the activity of SRC during wound repair. This is Keratin, type II cytoskeletal 6A (Krt6a) from Rattus norvegicus (Rat).